Here is a 353-residue protein sequence, read N- to C-terminus: Rhodopsin (353 aa).

Residues Met1–Ala36 lie on the Extracellular side of the membrane. Residues Asn2 and Asn15 are each glycosylated (N-linked (GlcNAc...) asparagine). The chain crosses the membrane as a helical span at residues Tyr37–Val61. The Cytoplasmic segment spans residues Thr62 to Asn73. The chain crosses the membrane as a helical span at residues Tyr74 to Tyr96. Residues Thr97 to Cys110 are Extracellular-facing. A disulfide bridge links Cys110 with Cys187. Residues Asn111 to Ile133 form a helical membrane-spanning segment. The 'Ionic lock' involved in activated form stabilization motif lies at Glu134–Trp136. Topologically, residues Glu134–His152 are cytoplasmic. Residues Ala153–Val173 form a helical membrane-spanning segment. Residues Gly174–Ser202 lie on the Extracellular side of the membrane. Residue Asn200 is glycosylated (N-linked (GlcNAc...) asparagine). The chain crosses the membrane as a helical span at residues Phe203–Gly224. Over Arg225–Arg252 the chain is Cytoplasmic. The helical transmembrane segment at Met253–Tyr274 threads the bilayer. The Extracellular segment spans residues Ile275 to Leu286. The helical transmembrane segment at Phe287–Cys308 threads the bilayer. Position 296 is an N6-(retinylidene)lysine (Lys296). Topologically, residues Met309–Ala353 are cytoplasmic. S-palmitoyl cysteine attachment occurs at residues Cys322 and Cys323. The interval Glu330–Ala353 is disordered. The segment covering Ala334 to Ala353 has biased composition (low complexity).

Belongs to the G-protein coupled receptor 1 family. Opsin subfamily. Phosphorylated on some or all of the serine and threonine residues present in the C-terminal region. Post-translationally, contains one covalently linked retinal chromophore.

The protein resides in the membrane. Its subcellular location is the cell projection. It localises to the cilium. It is found in the photoreceptor outer segment. In terms of biological role, photoreceptor required for image-forming vision at low light intensity. While most salt water fish species use retinal as chromophore, most freshwater fish use 3-dehydroretinal, or a mixture of retinal and 3-dehydroretinal. Light-induced isomerization of 11-cis to all-trans retinal triggers a conformational change that activates signaling via G-proteins. Subsequent receptor phosphorylation mediates displacement of the bound G-protein alpha subunit by arrestin and terminates signaling. This Chelon labrosus (Thicklip grey mullet) protein is Rhodopsin (rho).